Reading from the N-terminus, the 117-residue chain is Protein Turandot F (117 aa).

A signal peptide spans 1–22 (MKTVILFSFLLVLLGYLGAGHA).

Belongs to the Turandot family.

The protein resides in the secreted. Its function is as follows. A humoral factor that may play a role in stress tolerance. The polypeptide is Protein Turandot F (Drosophila sechellia (Fruit fly)).